The primary structure comprises 563 residues: Inclusion body clearance protein IML2 (563 aa).

It belongs to the IML2 family. In terms of assembly, interacts with lipid droplet proteins.

It localises to the cytoplasm. The protein localises to the nucleus. Inclusion body (IB) resident protein that interacts strongly with lipid droplet (LD) proteins. Involved in LD-mediated IB clearing after protein folding stress, probably by enabling access to the IBs of an LD-stored soluble sterol derivative that acts as a chaperone in inclusion clearing. This Schizosaccharomyces pombe (strain 972 / ATCC 24843) (Fission yeast) protein is Inclusion body clearance protein IML2.